A 186-amino-acid chain; its full sequence is Hydra actinoporin-like toxin 1 (186 aa).

An N-terminal signal peptide occupies residues 1 to 18; the sequence is MLLYICLVNLLLPLSVGA. The interval 29-48 is N-terminal region; that stretch reads KVGVDAALQQIDDVWKGKTV. The Cell attachment site, crucial for protein stability motif lies at 158–160; it reads RAG.

Belongs to the actinoporin family. HALT subfamily. As to quaternary structure, octamer or nonamer in membranes. Monomer in the soluble state. In vitro, interacts with folate receptor alpha (of target organism). Expressed female germline during oogenesis.

The protein localises to the nematocyst. Its subcellular location is the secreted. It is found in the target cell membrane. Pore-forming protein that forms hydrophilic pores and causes cytolysis. Compared to equinatoxin-2 (AC P61914), it reveals lower cytolysis activity (5-12-fold difference, tested on erythrocytes), a larger pore size (probably 2-3 nm) and different affinity to membrane lipids (100-fold lower affinity to sphingomyelin). Binds to sulfatides (SFT) as well as to the two sphingolipids, lysophosphatidic acid (LPA) and sphingosine-1-phosphate (S1P). It seems to bind more strongly to LPA than to S1P and SFT. Shows cytolytic activity on HeLa cells, with a different potency than its paralogs (from most potent to less potent: HALT-4&gt;HALT-6~HALT-1&gt;HALT-3&gt;HALT-7&gt;HALT-2). Pore formation is a multi-step process that involves specific recognition of membrane lipid by a protein aromatic residues rich region, firm binding to the membrane (mainly driven by hydrophobic interactions) accompanied by the transfer of the N-terminal region to the lipid-water interface and finally pore formation after oligomerization of monomers. In vitro, binds to the folate receptor alpha (FOLR1), a GPI-anchored membrane protein that plays a major role in the uptake of folate/folic acid into cells via endocytosis, suggesting a possible involvement of this receptor in the mechanism of HALT-1-induced cell lysis. In vivo, does not cause visible paralysis in larvae of the blowfly Sarcophaga faculata, the most common arthropod prey of Hydra. The chain is Hydra actinoporin-like toxin 1 from Hydra vulgaris (Hydra).